Here is a 381-residue protein sequence, read N- to C-terminus: Cobalt-precorrin-5B C(1)-methyltransferase (381 aa).

Belongs to the CbiD family.

It catalyses the reaction Co-precorrin-5B + S-adenosyl-L-methionine = Co-precorrin-6A + S-adenosyl-L-homocysteine. It participates in cofactor biosynthesis; adenosylcobalamin biosynthesis; cob(II)yrinate a,c-diamide from sirohydrochlorin (anaerobic route): step 6/10. Functionally, catalyzes the methylation of C-1 in cobalt-precorrin-5B to form cobalt-precorrin-6A. The polypeptide is Cobalt-precorrin-5B C(1)-methyltransferase (Clostridium botulinum (strain Eklund 17B / Type B)).